Here is a 485-residue protein sequence, read N- to C-terminus: Amino acid permease 1 (485 aa).

The span at 1 to 15 (MKSFNTEGHNHSTAE) shows a compositional bias: polar residues. A disordered region spans residues 1-35 (MKSFNTEGHNHSTAESGDAYTVSDPTKNVDEDGRE). The Cytoplasmic segment spans residues 1–40 (MKSFNTEGHNHSTAESGDAYTVSDPTKNVDEDGREKRTGT). Transmembrane regions (helical) follow at residues 41–61 (WLTASAHIITAVIGSGVLSLA) and 62–82 (WAIAQLGWIAGTSILLIFSFI). Over 83-129 (TYFTSTMLADCYRAPDPVTGKRNYTYMDVVRSYLGGRKVQLCGVAQY) the chain is Cytoplasmic. The helical transmembrane segment at 130-150 (GNLIGVTVGYTITASISLVAV) threads the bilayer. At 151–166 (GKSNCFHDKGHTADCT) the chain is on the extracellular side. Residues 167–187 (ISNYPYMAVFGIIQVILSQIP) traverse the membrane as a helical segment. Residues 188–194 (NFHKLSF) are Cytoplasmic-facing. The chain crosses the membrane as a helical span at residues 195–215 (LSIMAAVMSFTYATIGIGLAI). Residues 216-245 (ATVAGGKVGKTSMTGTAVGVDVTAAQKIWR) lie on the Extracellular side of the membrane. A helical transmembrane segment spans residues 246–266 (SFQAVGDIAFAYAYATVLIEI). The Cytoplasmic segment spans residues 267-285 (QDTLRSSPAENKAMKRASL). Residues 286–306 (VGVSTTTFFYILCGCIGYAAF) traverse the membrane as a helical segment. At 307-318 (GNNAPGDFLTDF) the chain is on the extracellular side. Residues 319 to 339 (GFFEPFWLIDFANACIAVHLI) traverse the membrane as a helical segment. At 340–394 (GAYQVFAQPIFQFVEKKCNRNYPDNKFITSEYSVNVPFLGKFNISLFRLVWRTAY) the chain is on the cytoplasmic side. Helical transmembrane passes span 395–415 (VVITTVVAMIFPFFNAILGLI) and 416–436 (GAASFWPLTVYFPVEMHIAQT). The Cytoplasmic segment spans residues 437–450 (KIKKYSARWIALKT). A helical membrane pass occupies residues 451 to 471 (MCYVCLIVSLLAAAGSIAGLI). Residues 472 to 485 (SSVKTYKPFRTMHE) are Extracellular-facing.

This sequence belongs to the amino acid/polyamine transporter 2 family. Amino acid/auxin permease (AAAP) (TC 2.A.18.2) subfamily. In terms of tissue distribution, highly expressed in developing pods. Found in the endosperm and in the storage parenchyma and the outer epidermis cells of the developing embryo. Lower levels of expression in flowers, in the vascular system of the cotyledon and in the root epidermal cells, including root hairs and throughout the root tip.

The protein resides in the cell membrane. Its activity is regulated as follows. Inhibited by carbonylcyanide m-chlorophenylhydrazone and diethylpyrocarbonate (DEPC). Functionally, amino acid-proton symporter. Stereospecific transporter with a broad specificity for histidine, glutamate and neutral amino acids. Reduced affinities for asparagine and valine. Involved in amino acid uptake from the apoplastic cavity into the embryo cells for storage protein accumulation and in root amino acid uptake. This is Amino acid permease 1 (AAP1) from Arabidopsis thaliana (Mouse-ear cress).